The sequence spans 152 residues: Gene 35 protein (152 aa).

Positions 86–120 (PKKVDILEELTDKVEELEANVSFEVDRIQGYQERY) form a coiled coil.

Belongs to the herpesviridae UL96 family.

The polypeptide is Gene 35 protein (35) (Connochaetes taurinus (Blue wildebeest)).